Consider the following 653-residue polypeptide: Fusexin 1 (653 aa).

Positions 1-24 (MKRVGNCWKASVAAFFLLMFTAFA) are cleaved as a signal peptide. The Extracellular portion of the chain corresponds to 25 to 559 (AADTTSVDTV…FENIWSGDAN (535 aa)). 4 disulfide bridges follow: C129-C167, C398-C441, C468-C487, and C499-C516. The fusion loop stretch occupies residues 155 to 160 (DYWTGS). Residues 560 to 580 (ALNWLQVFVTFIAFLGGFALV) traverse the membrane as a helical segment. At 581–604 (GVKLGKIVDGLATEFIPVKDSHVR) the chain is on the cytoplasmic side. A run of 2 helical transmembrane segments spans residues 605 to 625 (LVIG…LVTD) and 626 to 646 (PLGL…YLSA). Topologically, residues 647-653 (SAPEINL) are cytoplasmic.

It belongs to the HAP2/GCS1 family. Fusexin 1 subfamily. Homotrimer stabilized by interdomain contacts and numerous Ca(2+) and Na(+) ions.

It is found in the cell surface. The protein resides in the cell membrane. Exhibits fusogenic activity. Mediates cell-cell fusion in mammalian cells (bilateral fusion). The chain is Fusexin 1 from Haloplanus natans (strain DSM 17983 / JCM 14081 / CGMCC 1.8972 / RE-101).